Consider the following 469-residue polypeptide: Glutamate--tRNA ligase (469 aa).

Positions 9-19 (PSPTGFLHVGG) match the 'HIGH' region motif. Residues Cys98, Cys100, Cys125, and Asp127 each contribute to the Zn(2+) site. Residues 236 to 240 (KLSKR) carry the 'KMSKS' region motif. Lys239 contributes to the ATP binding site.

This sequence belongs to the class-I aminoacyl-tRNA synthetase family. Glutamate--tRNA ligase type 1 subfamily. As to quaternary structure, monomer. Zn(2+) serves as cofactor.

It is found in the cytoplasm. It carries out the reaction tRNA(Glu) + L-glutamate + ATP = L-glutamyl-tRNA(Glu) + AMP + diphosphate. Functionally, catalyzes the attachment of glutamate to tRNA(Glu) in a two-step reaction: glutamate is first activated by ATP to form Glu-AMP and then transferred to the acceptor end of tRNA(Glu). The polypeptide is Glutamate--tRNA ligase (Shewanella woodyi (strain ATCC 51908 / MS32)).